Here is a 72-residue protein sequence, read N- to C-terminus: uncharacterized protein (72 aa).

Residues 1-53 form a disordered region; that stretch reads MTNEPSTSTPTSTSTSTSTSTSTSTTTLTSTSSTPTSTSTSTSTSTSTSTSTS.

This is an uncharacterized protein from Dictyostelium discoideum (Social amoeba).